The chain runs to 405 residues: Cystathionine gamma-lyase (405 aa).

Residues R62, Y114, and R119 each coordinate substrate. K212 carries the N6-(pyridoxal phosphate)lysine modification. E339 contacts substrate.

This sequence belongs to the trans-sulfuration enzymes family. As to quaternary structure, homotetramer. Interacts with CALM in a calcium-dependent manner. The cofactor is pyridoxal 5'-phosphate.

The protein localises to the cytoplasm. The catalysed reaction is L,L-cystathionine + H2O = 2-oxobutanoate + L-cysteine + NH4(+). It carries out the reaction L-cysteine + H2O = hydrogen sulfide + pyruvate + NH4(+) + H(+). The enzyme catalyses L-homocysteine + H2O = 2-oxobutanoate + hydrogen sulfide + NH4(+) + H(+). It catalyses the reaction L-homoserine = 2-oxobutanoate + NH4(+). The catalysed reaction is L-selenocystathionine + H2O = L-selenocysteine + 2-oxobutanoate + NH4(+). It functions in the pathway amino-acid biosynthesis; L-cysteine biosynthesis; L-cysteine from L-homocysteine and L-serine: step 2/2. Its function is as follows. Catalyzes the last step in the trans-sulfuration pathway from L-methionine to L-cysteine in a pyridoxal-5'-phosphate (PLP)-dependent manner, which consists on cleaving the L,L-cystathionine molecule into L-cysteine, ammonia and 2-oxobutanoate. Part of the L-cysteine derived from the trans-sulfuration pathway is utilized for biosynthesis of the ubiquitous antioxidant glutathione. Besides its role in the conversion of L-cystathionine into L-cysteine, it utilizes L-cysteine and L-homocysteine as substrates (at much lower rates than L,L-cystathionine) to produce hydrogen sulfide (H2S). In vitro, it converts two L-cysteine molecules into lanthionine and H2S, and two L-homocysteine molecules to homolanthionine and H2S, which can be particularly relevant under conditions of severe hyperhomocysteinemia. Lanthionine and homolanthionine are structural homologs of L,L-cystathionine that differ by the absence or presence of an extra methylene group, respectively. Acts as a cysteine-protein sulfhydrase by mediating sulfhydration of target proteins: sulfhydration consists of converting -SH groups into -SSH on specific cysteine residues of target proteins such as GAPDH, PTPN1 and NF-kappa-B subunit RELA, thereby regulating their function. By generating the gasotransmitter H2S, it participates in a number of physiological processes such as vasodilation, bone protection, and inflammation. Plays an essential role in myogenesis by contributing to the biogenesis of H2S in skeletal muscle tissue. Can also accept homoserine as substrate. Catalyzes the elimination of selenocystathionine (which can be derived from the diet) to yield selenocysteine, ammonia and 2-oxobutanoate. The polypeptide is Cystathionine gamma-lyase (CTH) (Sus scrofa (Pig)).